A 432-amino-acid chain; its full sequence is Glutamate-1-semialdehyde 2,1-aminomutase (432 aa).

N6-(pyridoxal phosphate)lysine is present on Lys-272.

Belongs to the class-III pyridoxal-phosphate-dependent aminotransferase family. HemL subfamily. As to quaternary structure, homodimer. Requires pyridoxal 5'-phosphate as cofactor.

The protein localises to the cytoplasm. The catalysed reaction is (S)-4-amino-5-oxopentanoate = 5-aminolevulinate. It participates in porphyrin-containing compound metabolism; protoporphyrin-IX biosynthesis; 5-aminolevulinate from L-glutamyl-tRNA(Glu): step 2/2. The protein operates within porphyrin-containing compound metabolism; chlorophyll biosynthesis. The protein is Glutamate-1-semialdehyde 2,1-aminomutase of Nostoc sp. (strain PCC 7120 / SAG 25.82 / UTEX 2576).